The chain runs to 75 residues: Cytochrome c oxidase subunit 6C (75 aa).

Residues 1-13 (MASEVLVKPQMRG) are Mitochondrial matrix-facing. The chain crosses the membrane as a helical span at residues 14 to 54 (LLARRLRIHMVGAFLVSLGVAALYKFGVAEPRKKAYADFYK). Topologically, residues 55 to 75 (NYSAEKDFEEMKKAGLFRSIK) are mitochondrial intermembrane.

The protein belongs to the cytochrome c oxidase subunit 6c family. In terms of assembly, component of the cytochrome c oxidase (complex IV, CIV), a multisubunit enzyme composed of 14 subunits. The complex is composed of a catalytic core of 3 subunits MT-CO1, MT-CO2 and MT-CO3, encoded in the mitochondrial DNA, and 11 supernumerary subunits COX4I, COX5A, COX5B, COX6A, COX6B, COX6C, COX7A, COX7B, COX7C, COX8 and NDUFA4, which are encoded in the nuclear genome. The complex exists as a monomer or a dimer and forms supercomplexes (SCs) in the inner mitochondrial membrane with NADH-ubiquinone oxidoreductase (complex I, CI) and ubiquinol-cytochrome c oxidoreductase (cytochrome b-c1 complex, complex III, CIII), resulting in different assemblies (supercomplex SCI(1)III(2)IV(1) and megacomplex MCI(2)III(2)IV(2)).

It localises to the mitochondrion inner membrane. The protein operates within energy metabolism; oxidative phosphorylation. Component of the cytochrome c oxidase, the last enzyme in the mitochondrial electron transport chain which drives oxidative phosphorylation. The respiratory chain contains 3 multisubunit complexes succinate dehydrogenase (complex II, CII), ubiquinol-cytochrome c oxidoreductase (cytochrome b-c1 complex, complex III, CIII) and cytochrome c oxidase (complex IV, CIV), that cooperate to transfer electrons derived from NADH and succinate to molecular oxygen, creating an electrochemical gradient over the inner membrane that drives transmembrane transport and the ATP synthase. Cytochrome c oxidase is the component of the respiratory chain that catalyzes the reduction of oxygen to water. Electrons originating from reduced cytochrome c in the intermembrane space (IMS) are transferred via the dinuclear copper A center (CU(A)) of subunit 2 and heme A of subunit 1 to the active site in subunit 1, a binuclear center (BNC) formed by heme A3 and copper B (CU(B)). The BNC reduces molecular oxygen to 2 water molecules using 4 electrons from cytochrome c in the IMS and 4 protons from the mitochondrial matrix. The sequence is that of Cytochrome c oxidase subunit 6C (COX6C) from Plecturocebus donacophilus (Bolivian gray titi monkey).